Reading from the N-terminus, the 247-residue chain is MIFDPPLQSGQLVSRYKRFLTDVQLDNGEVITIHCANTGAMTGCAEPGTRVWYSTSSNPKRKLPHSWEIAESPAGHFICVNTARANQLARELIEQDALAPLRGYARLRTEVKYGEENSRIDLLLEDDHRPACYIEVKSVTLLDEREQAGMGYFPDAVTTRGAKHLRELMAMKAAGHRAVLLFMVLHSGIVRMRPAAHIDPHYSLLIEQAITAGVEILCYRPHVGVQSMVAQDFIPFESCHLLPEGSE.

Belongs to the SfsA family.

The polypeptide is Sugar fermentation stimulation protein homolog (Aeromonas hydrophila subsp. hydrophila (strain ATCC 7966 / DSM 30187 / BCRC 13018 / CCUG 14551 / JCM 1027 / KCTC 2358 / NCIMB 9240 / NCTC 8049)).